A 397-amino-acid polypeptide reads, in one-letter code: Lysophospholipid transporter LplT (397 aa).

The next 11 helical transmembrane spans lie at 16–36 (MLAVICAQFLSAFGDNALLFA), 53–73 (VLQMLFVGAYILFAPFVGQFA), 91–111 (LGAGCICFGVNPFIGYTLVGI), 139–159 (LMESSTIAAILLGSMAGGILA), 164–184 (LAALIVCALVYGGAVVANLWI), 227–247 (LFWGAGVTLRFLLVIWVPVAL), 253–273 (AMPTYLNAMVAVGIVLGAGAA), 281–301 (TVSRCMPAGILIGIAVIAFAV), 305–325 (LLPAFGLLLLLGVFGGFFIVP), 352–372 (NVAMLLMLGLYSLAVSVGVPP), and 373–393 (VAVGIGFGAVFAVAIAALWVW).

This sequence belongs to the major facilitator superfamily. LplT (TC 2.A.1.42) family.

It localises to the cell inner membrane. Its function is as follows. Catalyzes the facilitated diffusion of 2-acyl-glycero-3-phosphoethanolamine (2-acyl-GPE) into the cell. The protein is Lysophospholipid transporter LplT of Klebsiella pneumoniae subsp. pneumoniae (strain ATCC 700721 / MGH 78578).